Reading from the N-terminus, the 238-residue chain is Uridylate kinase (238 aa).

12-15 is a binding site for ATP; it reads KLSG. G54 is a UMP binding site. ATP-binding residues include G55 and R59. Residues D74 and 135–142 each bind UMP; that span reads TGNPFFTT. T162, Y168, and D171 together coordinate ATP.

It belongs to the UMP kinase family. In terms of assembly, homohexamer.

The protein resides in the cytoplasm. The enzyme catalyses UMP + ATP = UDP + ADP. It participates in pyrimidine metabolism; CTP biosynthesis via de novo pathway; UDP from UMP (UMPK route): step 1/1. With respect to regulation, inhibited by UTP. Its function is as follows. Catalyzes the reversible phosphorylation of UMP to UDP. The polypeptide is Uridylate kinase (Azoarcus sp. (strain BH72)).